A 398-amino-acid polypeptide reads, in one-letter code: Acetate kinase (398 aa).

Asparagine 8 contributes to the Mg(2+) binding site. Residue lysine 15 coordinates ATP. Residue arginine 89 coordinates substrate. Catalysis depends on aspartate 146, which acts as the Proton donor/acceptor. ATP contacts are provided by residues 206 to 210, 283 to 285, and 331 to 335; these read HIGNG, DMR, and GMGEN. Glutamate 383 contributes to the Mg(2+) binding site.

It belongs to the acetokinase family. As to quaternary structure, homodimer. Mg(2+) is required as a cofactor. Mn(2+) serves as cofactor.

Its subcellular location is the cytoplasm. It catalyses the reaction acetate + ATP = acetyl phosphate + ADP. The protein operates within metabolic intermediate biosynthesis; acetyl-CoA biosynthesis; acetyl-CoA from acetate: step 1/2. In terms of biological role, catalyzes the formation of acetyl phosphate from acetate and ATP. Can also catalyze the reverse reaction. The sequence is that of Acetate kinase from Streptococcus pyogenes serotype M49 (strain NZ131).